The primary structure comprises 145 residues: Large ribosomal subunit protein uL15 (145 aa).

The segment at 1-50 is disordered; the sequence is MLHTIKPVTNARKSTKRLGRGPGSGTGKTSGKGHKGQLARSGKTLRPGFE. Over residues 20 to 30 the composition is skewed to gly residues; that stretch reads RGPGSGTGKTS.

The protein belongs to the universal ribosomal protein uL15 family. In terms of assembly, part of the 50S ribosomal subunit.

Its function is as follows. Binds to the 23S rRNA. The protein is Large ribosomal subunit protein uL15 of Aster yellows witches'-broom phytoplasma (strain AYWB).